The chain runs to 355 residues: Peptide chain release factor 1 (355 aa).

Gln-233 carries the N5-methylglutamine modification. Positions 282–293 are enriched in basic and acidic residues; that stretch reads RKKEQARADSRR. Residues 282 to 305 form a disordered region; the sequence is RKKEQARADSRRGQVGSGDRSERI.

It belongs to the prokaryotic/mitochondrial release factor family. Post-translationally, methylated by PrmC. Methylation increases the termination efficiency of RF1.

Its subcellular location is the cytoplasm. Its function is as follows. Peptide chain release factor 1 directs the termination of translation in response to the peptide chain termination codons UAG and UAA. This Rickettsia rickettsii (strain Iowa) protein is Peptide chain release factor 1.